The primary structure comprises 423 residues: COP9 signalosome complex subunit 3 (423 aa).

Residues 197–365 (NFERALYFYE…GMVCFHDNPE (169 aa)) enclose the PCI domain. Residues 403–423 (FVQKSMGSQDDDSGSKPSSYS) are disordered.

It belongs to the CSN3 family. As to quaternary structure, component of the CSN complex, probably composed of cops1, cops2, cops3, cops4, cops5, cops6, cops7, cops8 and cops9.

It is found in the cytoplasm. The protein localises to the nucleus. Functionally, component of the COP9 signalosome complex (CSN), a complex involved in various cellular and developmental processes. The CSN complex is an essential regulator of the ubiquitin (Ubl) conjugation pathway by mediating the deneddylation of the cullin subunits of E3 ligase complexes, leading to modify the Ubl ligase activity. This is COP9 signalosome complex subunit 3 (cops3) from Xenopus tropicalis (Western clawed frog).